The chain runs to 145 residues: Bacilliredoxin BrxB (145 aa).

Residues Cys52 and Cys54 each act as nucleophile in the active site. Cys52 carries the post-translational modification S-bacillithiol cysteine disulfide. A CXC active site motif motif is present at residues 52–54 (CGC). The cysteines at positions 52 and 54 are disulfide-linked.

It belongs to the bacilliredoxin family. As to quaternary structure, interacts with BrxC. N-terminal Cys of the CXC active site motif can react with bacillithiol (BSH) to form mixed disulfides. S-bacillithiolation protects Cys residues against overoxidation by acting as a redox switch in response to oxidative stress.

Its function is as follows. S-bacillithiolation is the formation of mixed disulfide bonds between protein thiols and the general thiol reductant bacillithiol (BSH) under oxidative stress. BSH is an equivalent of glutathione (GSH) in Firmicutes. This protein is a dithiol bacilliredoxin, which debacillithiolates (removes BSH) the S-bacillithiolated OhrR (OhrR-SSB) in vitro and in vivo NaOCl-generated S-bacillithiolated MetE (MetE-SSB). Involved in maintaining redox homeostasis in response to disulfide stress conditions. The sequence is that of Bacilliredoxin BrxB from Bacillus subtilis (strain 168).